The sequence spans 315 residues: MAAAAAPGALGALSAGRVRLVAACCARLGSAAWARGTAPRRGYSSEVKTEDELRVRHLEEENRGIVVLGINRAYGKNSLSKNLLKMLSKAVDALKSDKKVRTIIIRSEVPGIFCAGADLKERAKMHSSEVGPFVSKIRAVINDIANLPVPTIAAIDGLALGGGLELALACDIRVAASSAKMGLVETKLAIIPGGGGTQRLPRAIGMALAKELIFSARVLDGQEAKAVGLISHVLEQNQEGDAAYRKALDLAREFLPQGPVAMRVAKLAINQGMEVDLVTGLAIEEACYAQTISTKDRLEGLLAFKEKRPPRYKGE.

The N-terminal 43 residues, 1–43 (MAAAAAPGALGALSAGRVRLVAACCARLGSAAWARGTAPRRGY), are a transit peptide targeting the mitochondrion. K76 carries the post-translational modification N6-acetyllysine; alternate. K76 carries the N6-succinyllysine; alternate modification. Residues 81–95 (KNLLKMLSKAVDALK) form an RNA-binding region. The residue at position 85 (K85) is an N6-succinyllysine. An N6-acetyllysine; alternate mark is found at K89 and K120. K89 and K120 each carry N6-succinyllysine; alternate. N6-succinyllysine occurs at positions 124 and 136. N6-acetyllysine; alternate is present on residues K180 and K187. Residues K180 and K187 each carry the N6-succinyllysine; alternate modification. K305 carries the post-translational modification N6-succinyllysine.

This sequence belongs to the enoyl-CoA hydratase/isomerase family. Homohexamer.

It localises to the mitochondrion. It catalyses the reaction (3S)-3-hydroxy-3-methylglutaryl-CoA = 3-methyl-(2E)-glutaconyl-CoA + H2O. It carries out the reaction (3S)-citramalyl-CoA = itaconyl-CoA + H2O. The catalysed reaction is 3-hydroxyisovaleryl-CoA = 3-methylbut-2-enoyl-CoA + H2O. The enzyme catalyses (S)-3-hydroxyglutaryl-CoA = (2E)-glutaconyl-CoA + H2O. Its pathway is amino-acid degradation; L-leucine degradation; (S)-3-hydroxy-3-methylglutaryl-CoA from 3-isovaleryl-CoA: step 3/3. In terms of biological role, catalyzes the fifth step in the leucine degradation pathway, the reversible hydration of 3-methylglutaconyl-CoA (3-MG-CoA) to 3-hydroxy-3-methylglutaryl-CoA (HMG-CoA). Can catalyze the reverse reaction but at a much lower rate in vitro. HMG-CoA is then quickly degraded by another enzyme (such as HMG-CoA lyase) to give acetyl-CoA and acetoacetate. Uses other substrates such as (2E)-glutaconyl-CoA efficiently in vitro, and to a lesser extent 3-methylcrotonyl-CoA (3-methyl-(2E)-butenoyl-CoA), crotonyl-CoA ((2E)-butenoyl-CoA) and 3-hydroxybutanoyl-CoA (the missing carboxylate reduces affinity to the active site). Originally it was identified as an RNA-binding protein as it binds to AU-rich elements (AREs) in vitro. AREs direct rapid RNA degradation and mRNA deadenylation. Might have itaconyl-CoA hydratase activity, converting itaconyl-CoA into citramalyl-CoA in the C5-dicarboxylate catabolism pathway. The C5-dicarboxylate catabolism pathway is required to detoxify itaconate, an antimicrobial metabolite and immunomodulator produced by macrophages during certain infections, that can act as a vitamin B12-poisoning metabolite. In Rattus norvegicus (Rat), this protein is Methylglutaconyl-CoA hydratase, mitochondrial.